Here is a 243-residue protein sequence, read N- to C-terminus: tRNA (guanine-N(1)-)-methyltransferase (243 aa).

Residues G108 and L127 to L132 each bind S-adenosyl-L-methionine.

This sequence belongs to the RNA methyltransferase TrmD family. As to quaternary structure, homodimer.

The protein resides in the cytoplasm. It carries out the reaction guanosine(37) in tRNA + S-adenosyl-L-methionine = N(1)-methylguanosine(37) in tRNA + S-adenosyl-L-homocysteine + H(+). Its function is as follows. Specifically methylates guanosine-37 in various tRNAs. The polypeptide is tRNA (guanine-N(1)-)-methyltransferase (Streptococcus gordonii (strain Challis / ATCC 35105 / BCRC 15272 / CH1 / DL1 / V288)).